A 436-amino-acid polypeptide reads, in one-letter code: L-threonine dehydratase biosynthetic IlvA (436 aa).

Residues 1–357 (MSETYVSEKS…HRGLKHYFLV (357 aa)) form a catalytic region. Lys70 bears the N6-(pyridoxal phosphate)lysine mark. Pyridoxal 5'-phosphate contacts are provided by residues Asn97, 203–207 (GGGGL), and Ser329. The ACT-like domain occupies 353 to 427 (HYFLVNFPQK…SAIDSRRLEP (75 aa)). The regulatory stretch occupies residues 358 to 436 (NFPQKPGQLR…PGTPEYEYLT (79 aa)).

It belongs to the serine/threonine dehydratase family. As to quaternary structure, homotetramer. Pyridoxal 5'-phosphate is required as a cofactor.

The catalysed reaction is L-threonine = 2-oxobutanoate + NH4(+). It participates in amino-acid biosynthesis; L-isoleucine biosynthesis; 2-oxobutanoate from L-threonine: step 1/1. Its function is as follows. Catalyzes the anaerobic formation of alpha-ketobutyrate and ammonia from threonine in a two-step reaction. The first step involved a dehydration of threonine and a production of enamine intermediates (aminocrotonate), which tautomerizes to its imine form (iminobutyrate). Both intermediates are unstable and short-lived. The second step is the nonenzymatic hydrolysis of the enamine/imine intermediates to form 2-ketobutyrate and free ammonia. In the low water environment of the cell, the second step is accelerated by RidA. This chain is L-threonine dehydratase biosynthetic IlvA (ilvA), found in Corynebacterium glutamicum (strain ATCC 13032 / DSM 20300 / JCM 1318 / BCRC 11384 / CCUG 27702 / LMG 3730 / NBRC 12168 / NCIMB 10025 / NRRL B-2784 / 534).